The primary structure comprises 350 residues: tRNA N6-adenosine threonylcarbamoyltransferase (350 aa).

Fe cation contacts are provided by His113 and His117. Substrate is bound by residues 135–139 (LVSGG), Asp169, Gly182, Asp186, and Asn282. Asp310 lines the Fe cation pocket.

This sequence belongs to the KAE1 / TsaD family. It depends on Fe(2+) as a cofactor.

Its subcellular location is the cytoplasm. The enzyme catalyses L-threonylcarbamoyladenylate + adenosine(37) in tRNA = N(6)-L-threonylcarbamoyladenosine(37) in tRNA + AMP + H(+). Its function is as follows. Required for the formation of a threonylcarbamoyl group on adenosine at position 37 (t(6)A37) in tRNAs that read codons beginning with adenine. Is involved in the transfer of the threonylcarbamoyl moiety of threonylcarbamoyl-AMP (TC-AMP) to the N6 group of A37, together with TsaE and TsaB. TsaD likely plays a direct catalytic role in this reaction. This Corynebacterium diphtheriae (strain ATCC 700971 / NCTC 13129 / Biotype gravis) protein is tRNA N6-adenosine threonylcarbamoyltransferase.